A 197-amino-acid chain; its full sequence is Protein GrpE (197 aa).

Basic and acidic residues predominate over residues 1–31; sequence MSDDTKKQDTAADAEVEKEMEGVPEHLRDDR. A disordered region spans residues 1–48; it reads MSDDTKKQDTAADAEVEKEMEGVPEHLRDDRGSEEDASDDLSAALESL.

This sequence belongs to the GrpE family. As to quaternary structure, homodimer.

It is found in the cytoplasm. In terms of biological role, participates actively in the response to hyperosmotic and heat shock by preventing the aggregation of stress-denatured proteins, in association with DnaK and GrpE. It is the nucleotide exchange factor for DnaK and may function as a thermosensor. Unfolded proteins bind initially to DnaJ; upon interaction with the DnaJ-bound protein, DnaK hydrolyzes its bound ATP, resulting in the formation of a stable complex. GrpE releases ADP from DnaK; ATP binding to DnaK triggers the release of the substrate protein, thus completing the reaction cycle. Several rounds of ATP-dependent interactions between DnaJ, DnaK and GrpE are required for fully efficient folding. This Erythrobacter litoralis (strain HTCC2594) protein is Protein GrpE.